The sequence spans 591 residues: Inactive metallocarboxypeptidase ECM14 (591 aa).

An N-terminal signal peptide occupies residues 1 to 21 (MRLFARLEVLAILACAVPIAA). The propeptide occupies 22–175 (IPSFLSNSYP…QTIYESYPSS (154 aa)). The Peptidase M14 domain maps to 203–523 (DYQPFSVIVT…NAVMVLGRFL (321 aa)). The Zn(2+) site is built by histidine 265 and glutamate 268. Residues 265 to 268 (HARE), arginine 323, and 340 to 341 (DR) contribute to the substrate site. Cysteine 334 and cysteine 357 are oxidised to a cystine. Residues asparagine 350 and asparagine 381 are each glycosylated (N-linked (GlcNAc...) asparagine). Histidine 397 contributes to the Zn(2+) binding site. 398-399 (SY) provides a ligand contact to substrate. Basic and acidic residues predominate over residues 533 to 543 (DWEDESQRPKA). Positions 533-591 (DWEDESQRPKADEDDIPSENELGENDDSWIPFDYRNHDDQNEGEGYDNDEWGFRRRRKG) are disordered. 2 stretches are compositionally biased toward acidic residues: residues 544 to 559 (DEDD…ENDD) and 573 to 582 (NEGEGYDNDE).

It belongs to the peptidase M14 family. It depends on Zn(2+) as a cofactor.

It localises to the vacuole. The protein resides in the secreted. Inactive carboxypeptidase that may play a role in cell wall organization and biogenesis. This chain is Inactive metallocarboxypeptidase ECM14 (ECM14), found in Paracoccidioides lutzii (strain ATCC MYA-826 / Pb01) (Paracoccidioides brasiliensis).